We begin with the raw amino-acid sequence, 403 residues long: Argininosuccinate synthase (403 aa).

9–17 contacts ATP; the sequence is AYSGGLDTS. Residue Tyr-86 coordinates L-citrulline. Gly-116 contributes to the ATP binding site. Residues Thr-118, Asn-122, and Asp-123 each coordinate L-aspartate. L-citrulline is bound at residue Asn-122. The L-citrulline site is built by Arg-126, Ser-174, Glu-259, and Tyr-271.

It belongs to the argininosuccinate synthase family. Type 1 subfamily. Homotetramer.

The protein resides in the cytoplasm. The enzyme catalyses L-citrulline + L-aspartate + ATP = 2-(N(omega)-L-arginino)succinate + AMP + diphosphate + H(+). Its pathway is amino-acid biosynthesis; L-arginine biosynthesis; L-arginine from L-ornithine and carbamoyl phosphate: step 2/3. The protein is Argininosuccinate synthase of Ligilactobacillus salivarius (strain UCC118) (Lactobacillus salivarius).